Here is a 154-residue protein sequence, read N- to C-terminus: Bacterial ferritin (154 aa).

Positions Met1–Gly145 constitute a Ferritin-like diiron domain. Positions 18, 46, 47, 50, 51, 54, 93, 129, and 130 each coordinate Fe(3+).

Belongs to the bacterioferritin family. In terms of assembly, the bacterioferritin (BFR) complex is formed of 24 subunits (FtnA and BfrB) arranged as 12 homodimers. The holocomplex contains about 8.7% Fe and 8.0% phosphate. In vivo purifies with BfrB in varying ratios, depending on the O(2) content; as O(2) decreases FtnA content rises. Pure FtnA BFR complexes are not isolated in situ, although in a bfrB deletion some iron will accumulate in FtnA ferritin complexes. Upon crystallization forms homooligomers of 24 subunits, the BFR complex, arranged as 12 dimers, that are packed together to form an approximately spherical molecule with a central cavity, in which large amounts of iron can be deposited. The BFR shell has three- and four-fold pores; Fe(2+) may move in and out of the shell via the four-fold pores. Does not interact with Bfd.

Its subcellular location is the cytoplasm. It carries out the reaction 4 Fe(2+) + O2 + 4 H(+) = 4 Fe(3+) + 2 H2O. The enzyme catalyses Fe(2+)(in) = Fe(2+)(out). Functionally, plays a role in catalase A (katA) expression; activity is required for optimal KatA activity and resistance to H(2)O(2). Iron-storage protein that is part of the heterooligomeric bacterioferritin (BFR) complex. The ferroxidase center binds Fe(2+), oxidizes it using dioxygen to Fe(3+), and participates in subsequent Fe(3+) oxide mineral core formation within the central cavity of the BFR protein shell. Can store up to 520 iron atoms per ferritin protein molecule. Iron release requires only the input of electrons from ferredoxin NADP reductase (FPR), does not require Bfd. Does not bind heme. This Pseudomonas aeruginosa (strain ATCC 15692 / DSM 22644 / CIP 104116 / JCM 14847 / LMG 12228 / 1C / PRS 101 / PAO1) protein is Bacterial ferritin.